The following is a 519-amino-acid chain: Chloroethene reductive dehalogenase (519 aa).

Residues M1–S43 constitute a signal peptide (tat-type signal). 4Fe-4S ferredoxin-type domains lie at P388–E420 and L435–A465. Positions 400, 403, 406, 410, 444, 448, 451, and 455 each coordinate [4Fe-4S] cluster.

It belongs to the PceA family. Requires [4Fe-4S] cluster as cofactor. It depends on corrinoid as a cofactor. Post-translationally, predicted to be exported by the Tat system. The position of the signal peptide cleavage has been experimentally proven.

The protein localises to the cell membrane. The catalysed reaction is chloroethene + AH2 = ethene + chloride + A + H(+). It carries out the reaction (Z)-1,2-dichloroethene + AH2 = chloroethene + chloride + A + H(+). It catalyses the reaction 1,1-dichloroethene + AH2 = chloroethene + chloride + A + H(+). Catalyzes the reductive dechlorination of chloroethene (or vinyl chloride, VC) to ethene. Can also reduce all dichloroethene (DCE) isomers, but not tetrachloroethene (PCE) or trichloroethene (TCE), at high rates. Reduced methyl viologen can act as the artificial electron donor. The sequence is that of Chloroethene reductive dehalogenase from Dehalococcoides mccartyi (strain VS).